The chain runs to 180 residues: Inner membrane assembly complex subunit 17 (180 aa).

The transit peptide at 1 to 36 (MMIRNQLYRKCIIGGGRSILNGWVINGTVPNIGLRY) directs the protein to the mitochondrion. Residues 37–105 (LRSGIVTRSN…RKTQDIPIKR (69 aa)) lie on the Mitochondrial matrix side of the membrane. The chain crosses the membrane as a helical span at residues 106–128 (FIRPTWMFLLMSSTFYLLGHYIW). Residues 129–163 (WKLEYDEVEKELDRQVTALEEELHNLIEEHRVHGE) are a coiled coil. At 129–180 (WKLEYDEVEKELDRQVTALEEELHNLIEEHRVHGENEAIKNKKHKHWYKFWS) the chain is on the mitochondrial intermembrane side.

This sequence belongs to the INA17 family. As to quaternary structure, component of the inner membrane assembly (INA) complex, composed of INA17 and INA22. Interacts with a subset of F(1)F(0)-ATP synthase subunits of the F(1)-domain and the peripheral stalk.

The protein resides in the mitochondrion inner membrane. Component of the INA complex (INAC) that promotes the biogenesis of mitochondrial F(1)F(0)-ATP synthase. INAC facilitates the assembly of the peripheral stalk and promotes the assembly of the catalytic F(1)-domain with the membrane-embedded F(0)-domain. This is Inner membrane assembly complex subunit 17 from Vanderwaltozyma polyspora (strain ATCC 22028 / DSM 70294 / BCRC 21397 / CBS 2163 / NBRC 10782 / NRRL Y-8283 / UCD 57-17) (Kluyveromyces polysporus).